The sequence spans 446 residues: Serine--tRNA ligase, mitochondrial (446 aa).

Residue 251 to 253 (TAE) participates in L-serine binding. Residues 284–286 (RAE) and valine 300 each bind ATP. An L-serine-binding site is contributed by glutamate 307. Position 371 to 374 (371 to 374 (EISS)) interacts with ATP. Threonine 407 is an L-serine binding site.

It belongs to the class-II aminoacyl-tRNA synthetase family. Type-1 seryl-tRNA synthetase subfamily. Homodimer. The tRNA molecule binds across the dimer.

The protein localises to the mitochondrion matrix. The catalysed reaction is tRNA(Ser) + L-serine + ATP = L-seryl-tRNA(Ser) + AMP + diphosphate + H(+). Its function is as follows. Catalyzes the attachment of serine to tRNA(Ser). The sequence is that of Serine--tRNA ligase, mitochondrial (DIA4) from Saccharomyces cerevisiae (strain ATCC 204508 / S288c) (Baker's yeast).